The chain runs to 516 residues: Membrane-bound transcription factor site-2 protease (516 aa).

The Cytoplasmic segment spans residues 1–3 (MIP). The chain crosses the membrane as a helical span at residues 4–24 (VSLVVVVVGGWTAVYLTDLVL). At 25–74 (KSSVYFKHSYEDWLENNGLSISPFHIRWQTAVFNRAFYSWGRRKARMLYQ) the chain is on the lumenal side. The next 2 helical transmembrane spans lie at 75–95 (WFNF…FLLG) and 96–107 (KTLIQTLGQMMA). At 108–141 (DSSYSSSSSSSSHSSSSSSSSSSSSSLYNEQVLQ) the chain is on the lumenal side. Residues 142-166 (VVVPGINLPVNQLTYFFAAVLISGV) traverse the membrane as a helical segment. Zn(2+) is bound at residue H168. E169 is a catalytic residue. 3 consecutive transmembrane segments (helical) span residues 171-183 (GHGI…QVRF), 184-206 (NGFG…TTHL), and 226-248 (FILA…PFYY). H172 is a binding site for Zn(2+). Topologically, residues 249 to 443 (TGVGVLITEV…LPVVVETFVK (195 aa)) are lumenal. N334 carries an N-linked (GlcNAc...) asparagine glycan. 2 consecutive transmembrane segments (helical) span residues 444–461 (YLIS…VPCF) and 462–473 (ALDGQWILNSFL). The Lumenal portion of the chain corresponds to 474 to 489 (DATLTSVIGDNDVKDL). The chain crosses the membrane as a helical span at residues 490-510 (IGFFILLGGSILLAANVALGL). Residues 511–516 (WMVTAR) lie on the Cytoplasmic side of the membrane.

It belongs to the peptidase M50A family. Requires Zn(2+) as cofactor.

The protein localises to the membrane. Its subcellular location is the cytoplasm. The protein resides in the golgi apparatus membrane. It catalyses the reaction Cleaves several transcription factors that are type-2 transmembrane proteins within membrane-spanning domains. Known substrates include sterol regulatory element-binding protein (SREBP) -1, SREBP-2 and forms of the transcriptional activator ATF6. SREBP-2 is cleaved at the site 477-DRSRILL-|-CVLTFLCLSFNPLTSLLQWGGA-505. The residues Asn-Pro, 11 residues distal to the site of cleavage in the membrane-spanning domain, are important for cleavage by S2P endopeptidase. Replacement of either of these residues does not prevent cleavage, but there is no cleavage if both of these residues are replaced.. Functionally, zinc metalloprotease that mediates intramembrane proteolysis of proteins such as ATF6, ATF6B, SREBF1/SREBP1 and SREBF2/SREBP2. Catalyzes the second step in the proteolytic activation of the sterol regulatory element-binding proteins (SREBPs) SREBF1/SREBP1 and SREBF2/SREBP2: cleaves SREBPs within the first transmembrane segment, thereby releasing the N-terminal segment with a portion of the transmembrane segment attached. Mature N-terminal SREBP fragments shuttle to the nucleus and activate gene transcription. Also mediates the second step in the proteolytic activation of the cyclic AMP-dependent transcription factor ATF-6 (ATF6 and ATF6B). Involved in intramembrane proteolysis during bone formation. In astrocytes and osteoblasts, upon DNA damage and ER stress, mediates the second step of the regulated intramembrane proteolytic activation of the transcription factor CREB3L1, leading to the inhibition of cell-cycle progression. This chain is Membrane-bound transcription factor site-2 protease, found in Bos taurus (Bovine).